Reading from the N-terminus, the 560-residue chain is Oxygen-dependent choline dehydrogenase (560 aa).

Position 8–37 (8–37 (DYIIIGAGSAGNVLATRLTEDADVSVLLLE)) interacts with FAD. H475 functions as the Proton acceptor in the catalytic mechanism.

Belongs to the GMC oxidoreductase family. The cofactor is FAD.

It carries out the reaction choline + A = betaine aldehyde + AH2. The catalysed reaction is betaine aldehyde + NAD(+) + H2O = glycine betaine + NADH + 2 H(+). Its pathway is amine and polyamine biosynthesis; betaine biosynthesis via choline pathway; betaine aldehyde from choline (cytochrome c reductase route): step 1/1. In terms of biological role, involved in the biosynthesis of the osmoprotectant glycine betaine. Catalyzes the oxidation of choline to betaine aldehyde and betaine aldehyde to glycine betaine at the same rate. The chain is Oxygen-dependent choline dehydrogenase from Stenotrophomonas maltophilia (strain K279a).